Consider the following 348-residue polypeptide: Nicotinate-nucleotide--dimethylbenzimidazole phosphoribosyltransferase (348 aa).

Glutamate 316 functions as the Proton acceptor in the catalytic mechanism.

The protein belongs to the CobT family.

It carries out the reaction 5,6-dimethylbenzimidazole + nicotinate beta-D-ribonucleotide = alpha-ribazole 5'-phosphate + nicotinate + H(+). It functions in the pathway nucleoside biosynthesis; alpha-ribazole biosynthesis; alpha-ribazole from 5,6-dimethylbenzimidazole: step 1/2. Its function is as follows. Catalyzes the synthesis of alpha-ribazole-5'-phosphate from nicotinate mononucleotide (NAMN) and 5,6-dimethylbenzimidazole (DMB). This Xanthomonas campestris pv. campestris (strain 8004) protein is Nicotinate-nucleotide--dimethylbenzimidazole phosphoribosyltransferase.